We begin with the raw amino-acid sequence, 317 residues long: Putative peptide import ATP-binding protein BruAb2_0797 (317 aa).

The ABC transporter domain maps to 7–250; sequence LSVRGLAKHY…PQHPYTRALL (244 aa). Position 43–50 (43–50) interacts with ATP; it reads GESGSGKT.

This sequence belongs to the ABC transporter superfamily. The complex is composed of two ATP-binding proteins (BruAb2_0796 and BruAb2_0797), two transmembrane proteins (BruAb2_0794) and a solute-binding protein (BruAb2_0792).

It localises to the cell inner membrane. Probably part of an ABC transporter complex that could be involved in peptide import. Probably responsible for energy coupling to the transport system. The chain is Putative peptide import ATP-binding protein BruAb2_0797 from Brucella abortus biovar 1 (strain 9-941).